A 1088-amino-acid polypeptide reads, in one-letter code: MESASSSLATSGRRRSSSGGGGGSWGSIGSAADPFDIPAKGAPVESLKKWRQAALVLNASRRFRYTLDLKREEQREEVISKIRAQAHVVRAAFRFKEAGQVHVQQKEVAAPPVDGALGFGIKEDQLTALTRDHNYSALQQYGGISGVARMLKTDTEKGISGDDSDLTARRNAFGSNTYPRKKGRSFLAFLWDACKDLTLIILMVAAAVSLALGITTEGIKEGWYDGASIAFAVLLVVVVTATSDYKQSLQFQNLNEEKQNIKLEVVRGGRRISVSIYDLVAGDVVPLKIGDQVPADGILISGHSLSVDESSMTGESKIVHKDQKSPFLMSGCKVADGYGTMLVTAVGINTEWGLLMASISEDSGEETPLQVRLNGVATFIGMVGLSVALAVLVVLLARYFTGHTYNPDGSVQYVKGKMGVGQTIRGIVGIFTVAVTIVVVAVPEGLPLAVTLTLAFSMRKMMRDKALVRRLSACETMGSATTICSDKTGTLTLNQMTVVEAYFGGKKMDPPDNVQVLSASISSLIVEGIAQNTSGSIFEPENGQDPEVTGSPTEKAILSWGLKLGMRFNDTRTKSSILHVFPFNSEKKRGGVAVHLGGSESEVHIHWKGAAEIILDSCKSWLAADGSKHSMTPEKISEFKKFIEDMAASSLRCVAFAYRTYEMVDVPSEDRRADWILPEDDLIMLGIVGIKDPCRPGVKDSVRLCAAAGIKVRMVTGDNLQTARAIALECGILSDPNVSEPVIIEGKAFRALSDLEREEAAEKISVMGRSSPNDKLLLVKALRKRGHVVAVTGDGTNDAPALHEADIGLSMGIQGTEVAKESSDIIILDDNFASVVRVVRWGRSVYANIQKFIQFQLTVNVAALIINVVAAVSSGNVPLNAVQLLWVNLIMDTLGALALATEPPTDHLMQRPPVGRREPLITNVMWRNLIIMALFQVIVLLTLNFRGTSLLQLKNDNQAHADKVKNTFIFNTFVLCQVFNEFNARKPDELNIFKGITGNHLFMAIVAITVVLQALIVEFLGKFTSTTRLTWQLWLVSIGLAFFSWPLAFVGKLIPVPERPLGDFFACCCPGSKQAADAKGDDADHSDV.

The segment covering methionine 1–serine 11 has biased composition (low complexity). A disordered region spans residues methionine 1–alanine 32. Residues methionine 1–threonine 198 are Cytoplasmic-facing. The chain crosses the membrane as a helical span at residues leucine 199–isoleucine 219. Over lysine 220 to glutamate 221 the chain is Extracellular. Residues glycine 222–threonine 242 traverse the membrane as a helical segment. Residues serine 243–tyrosine 338 lie on the Cytoplasmic side of the membrane. Residues glycine 339–isoleucine 359 traverse the membrane as a helical segment. At serine 360–glycine 375 the chain is on the extracellular side. A helical transmembrane segment spans residues valine 376–leucine 396. The Cytoplasmic segment spans residues alanine 397–arginine 425. Residues glycine 426–leucine 446 traverse the membrane as a helical segment. Residues proline 447–lysine 851 lie on the Extracellular side of the membrane. Catalysis depends on aspartate 486, which acts as the 4-aspartylphosphate intermediate. Asparagine 532, asparagine 569, and asparagine 737 each carry an N-linked (GlcNAc...) asparagine glycan. Mg(2+) is bound by residues aspartate 794 and aspartate 798. The helical transmembrane segment at phenylalanine 852–valine 872 threads the bilayer. The Cytoplasmic portion of the chain corresponds to serine 873–asparagine 880. A helical membrane pass occupies residues alanine 881 to threonine 901. At glutamate 902–proline 919 the chain is on the extracellular side. Residues leucine 920 to leucine 940 traverse the membrane as a helical segment. At leucine 941–histidine 1000 the chain is on the cytoplasmic side. The helical transmembrane segment at leucine 1001–glycine 1021 threads the bilayer. The Extracellular segment spans residues lysine 1022–threonine 1030. Residues tryptophan 1031 to glycine 1051 traverse the membrane as a helical segment. Topologically, residues lysine 1052–valine 1088 are cytoplasmic.

This sequence belongs to the cation transport ATPase (P-type) (TC 3.A.3) family. Type IIB subfamily. In terms of assembly, interacts with NOH1.

Its subcellular location is the cell membrane. The catalysed reaction is Ca(2+)(in) + ATP + H2O = Ca(2+)(out) + ADP + phosphate + H(+). With respect to regulation, activated by calmodulin. Functionally, this magnesium-dependent enzyme catalyzes the hydrolysis of ATP coupled with the translocation of calcium from the cytosol out of the cell, into the endoplasmic reticulum, or into organelles. Involved in salt and drought stress tolerance. Involved in cold stress tolerance. The chain is Calcium-transporting ATPase 5, plasma membrane-type from Oryza sativa subsp. japonica (Rice).